The primary structure comprises 868 residues: Leucine--tRNA ligase (868 aa).

The 'HIGH' region signature appears at 42–52 (PYPSGKLHMGH). A 'KMSKS' region motif is present at residues 627–631 (KMSKS). Position 630 (lysine 630) interacts with ATP.

It belongs to the class-I aminoacyl-tRNA synthetase family.

The protein resides in the cytoplasm. It carries out the reaction tRNA(Leu) + L-leucine + ATP = L-leucyl-tRNA(Leu) + AMP + diphosphate. The chain is Leucine--tRNA ligase from Pseudomonas savastanoi pv. phaseolicola (strain 1448A / Race 6) (Pseudomonas syringae pv. phaseolicola (strain 1448A / Race 6)).